The following is a 123-amino-acid chain: cAMP-responsive element-binding protein-like 2 (123 aa).

The segment at 1–24 is disordered; the sequence is MDDSKVVGGKVKKPGKRGRKPAKI. Residues 10-21 are compositionally biased toward basic residues; the sequence is KVKKPGKRGRKP. In terms of domain architecture, bZIP spans 23–86; it reads KIDLKAKLER…MAMDQGKIPS (64 aa). The tract at residues 29 to 60 is basic motif; that stretch reads KLERSRQSARECRARKKLRYQYLEELVSSRER. Residues 62–69 form a leucine-zipper region; the sequence is ICALREEL. Residues 92-123 form a disordered region; sequence LTGEEQSKPQQNSSRHPKAGKTDANTNSLVGN. Positions 114–123 are enriched in polar residues; the sequence is DANTNSLVGN.

Belongs to the bZIP family. ATF subfamily. Interacts with CREB1; regulates CREB1 phosphorylation, stability and transcriptional activity. In terms of processing, phosphorylated by AMPK. In terms of tissue distribution, widely expressed with higher expression in adipose tissue, skeletal muscle, and liver (at protein level).

The protein localises to the nucleus. In terms of biological role, probable regulator of CREB1 transcriptional activity which is involved in adipose cells differentiation. May also play a regulatory role in the cell cycle. In Mus musculus (Mouse), this protein is cAMP-responsive element-binding protein-like 2 (Crebl2).